The following is a 448-amino-acid chain: Putative sodium-coupled neutral amino acid transporter 11 (448 aa).

Residues 1–20 (MESERSCLLSSHDAGKGGSS) are disordered. 11 consecutive transmembrane segments (helical) span residues 22–42 (VSSASFNFINSIIGSGIIGLP), 52–72 (MGLLLLILVAFITDYSIILLV), 94–114 (IGYIIVSVLQFLYPFIAMISY), 143–163 (FVIAMSTVLFTLPLSLYRDIA), 165–185 (LGKVSLLSMILTFGILMTVVV), 200–220 (AWVFARWNAIQAVAVMSFALI), 246–266 (ISVGSSVLVSAVFAAAGYATF), 286–306 (TFGRFCYGVSIITTFPLECFV), 324–344 (SSHVIITLVIISATTAISLSY), 346–366 (CLGIVLELNGILSAVPLMFIF), and 389–409 (MILVAGVFVMIIGLIMMALFP). N-linked (GlcNAc...) asparagine glycosylation is found at Asn425, Asn440, and Asn444.

It belongs to the amino acid/polyamine transporter 2 family.

It is found in the membrane. Putative sodium-dependent amino acid/proton antiporter. This Danio rerio (Zebrafish) protein is Putative sodium-coupled neutral amino acid transporter 11 (slc38a11).